The chain runs to 673 residues: Exoribonuclease 2 (673 aa).

The 326-residue stretch at 191-516 folds into the RNB domain; the sequence is RTDLTATPFF…NHRLLKAVIA (326 aa). The 84-residue stretch at 562-645 folds into the S1 motif domain; the sequence is DKVFNAEIID…ETRSLIAKPA (84 aa). The disordered stretch occupies residues 650–673; sequence PGPAPVAPTSEADATPADEAPKAE.

This sequence belongs to the RNR ribonuclease family. RNase II subfamily.

The protein resides in the cytoplasm. The enzyme catalyses Exonucleolytic cleavage in the 3'- to 5'-direction to yield nucleoside 5'-phosphates.. Functionally, involved in mRNA degradation. Hydrolyzes single-stranded polyribonucleotides processively in the 3' to 5' direction. The sequence is that of Exoribonuclease 2 from Aeromonas hydrophila subsp. hydrophila (strain ATCC 7966 / DSM 30187 / BCRC 13018 / CCUG 14551 / JCM 1027 / KCTC 2358 / NCIMB 9240 / NCTC 8049).